Reading from the N-terminus, the 311-residue chain is Coproporphyrin III ferrochelatase (311 aa).

Residues tyrosine 12, arginine 29, 45–46 (RY), serine 53, and tyrosine 124 contribute to the Fe-coproporphyrin III site. Fe(2+) contacts are provided by histidine 182 and glutamate 263.

The protein belongs to the ferrochelatase family.

The protein resides in the cytoplasm. It catalyses the reaction Fe-coproporphyrin III + 2 H(+) = coproporphyrin III + Fe(2+). It participates in porphyrin-containing compound metabolism; protoheme biosynthesis. Functionally, involved in coproporphyrin-dependent heme b biosynthesis. Catalyzes the insertion of ferrous iron into coproporphyrin III to form Fe-coproporphyrin III. This is Coproporphyrin III ferrochelatase from Bacillus mycoides (strain KBAB4) (Bacillus weihenstephanensis).